Reading from the N-terminus, the 409-residue chain is Snake venom metalloproteinase BITM02A (409 aa).

An N-terminal signal peptide occupies residues 1-20 (MIEVLLVTICLAAFPYQGSS). Positions 21–189 (IILESGNVND…KKASQSNLTP (169 aa)) are excised as a propeptide. The Peptidase M12B domain occupies 193 to 389 (RYIELFIVVD…ENPQCILNKR (197 aa)). Positions 196 and 280 each coordinate Ca(2+). Disulfide bonds link Cys-304-Cys-384, Cys-344-Cys-368, and Cys-346-Cys-351. Zn(2+) is bound at residue His-329. Residue Glu-330 is part of the active site. The Zn(2+) site is built by His-333 and His-339. Positions 384, 387, 399, 402, 404, 406, and 409 each coordinate Ca(2+). Residues 390–409 (LRTDTVSTPVSGNELLEAGE) constitute a propeptide that is removed on maturation.

The protein belongs to the venom metalloproteinase (M12B) family. P-I subfamily. As to quaternary structure, monomer. The cofactor is Zn(2+). As to expression, expressed by the venom gland.

The protein localises to the secreted. In terms of biological role, snake venom metalloproteinase that impairs hemostasis in the envenomed animal. This is Snake venom metalloproteinase BITM02A from Bothrops insularis (Golden lancehead).